The primary structure comprises 213 residues: Phosphatidylserine decarboxylase proenzyme (213 aa).

Residue S182 is the Schiff-base intermediate with substrate; via pyruvic acid of the active site. At S182 the chain carries Pyruvic acid (Ser); by autocatalysis.

Belongs to the phosphatidylserine decarboxylase family. PSD-A subfamily. Heterodimer of a large membrane-associated beta subunit and a small pyruvoyl-containing alpha subunit. The cofactor is pyruvate. In terms of processing, is synthesized initially as an inactive proenzyme. Formation of the active enzyme involves a self-maturation process in which the active site pyruvoyl group is generated from an internal serine residue via an autocatalytic post-translational modification. Two non-identical subunits are generated from the proenzyme in this reaction, and the pyruvate is formed at the N-terminus of the alpha chain, which is derived from the carboxyl end of the proenzyme. The post-translation cleavage follows an unusual pathway, termed non-hydrolytic serinolysis, in which the side chain hydroxyl group of the serine supplies its oxygen atom to form the C-terminus of the beta chain, while the remainder of the serine residue undergoes an oxidative deamination to produce ammonia and the pyruvoyl prosthetic group on the alpha chain.

It is found in the cell membrane. The enzyme catalyses a 1,2-diacyl-sn-glycero-3-phospho-L-serine + H(+) = a 1,2-diacyl-sn-glycero-3-phosphoethanolamine + CO2. The protein operates within phospholipid metabolism; phosphatidylethanolamine biosynthesis; phosphatidylethanolamine from CDP-diacylglycerol: step 2/2. Functionally, catalyzes the formation of phosphatidylethanolamine (PtdEtn) from phosphatidylserine (PtdSer). This is Phosphatidylserine decarboxylase proenzyme from Geotalea daltonii (strain DSM 22248 / JCM 15807 / FRC-32) (Geobacter daltonii).